The following is a 280-amino-acid chain: Tryptophan 2,3-dioxygenase (280 aa).

Residues 49-53 (FIIIH), Tyr111, and Arg115 contribute to the substrate site. His238 contributes to the heme binding site. Thr252 contacts substrate.

It belongs to the tryptophan 2,3-dioxygenase family. In terms of assembly, homotetramer. It depends on heme as a cofactor.

It catalyses the reaction L-tryptophan + O2 = N-formyl-L-kynurenine. It participates in amino-acid degradation; L-tryptophan degradation via kynurenine pathway; L-kynurenine from L-tryptophan: step 1/2. Functionally, heme-dependent dioxygenase that catalyzes the oxidative cleavage of the L-tryptophan (L-Trp) pyrrole ring and converts L-tryptophan to N-formyl-L-kynurenine. Catalyzes the oxidative cleavage of the indole moiety. This chain is Tryptophan 2,3-dioxygenase, found in Geobacillus thermodenitrificans (strain NG80-2).